Here is a 171-residue protein sequence, read N- to C-terminus: Protein phosphatase 1 regulatory subunit 1A (171 aa).

Met1 bears the N-acetylmethionine mark. The interval 1 to 171 (MEQDNSPRKI…PLDSKGANSV (171 aa)) is disordered. The interval 9-12 (KIQF) is essential for activity. Basic and acidic residues predominate over residues 19-29 (PHLDPEAAEQI). At Thr35 the chain carries Phosphothreonine; by PKA. The essential for activity stretch occupies residues 42–54 (TSDQSSPEIDEDR). Ser43, Ser46, Ser47, and Ser67 each carry phosphoserine. A compositionally biased stretch (basic and acidic residues) spans 135-157 (KTAECIPKTHERGSKEPSTKEPS). The interaction with PPP1R15A stretch occupies residues 143–171 (THERGSKEPSTKEPSTHIPPLDSKGANSV).

The protein belongs to the protein phosphatase inhibitor 1 family. In terms of assembly, interacts with PPP1R15A. In terms of processing, phosphorylation of Thr-35 is required for activity.

Its function is as follows. Inhibitor of protein-phosphatase 1. This protein may be important in hormonal control of glycogen metabolism. Hormones that elevate intracellular cAMP increase I-1 activity in many tissues. I-1 activation may impose cAMP control over proteins that are not directly phosphorylated by PKA. Following a rise in intracellular calcium, I-1 is inactivated by calcineurin (or PP2B). Does not inhibit type-2 phosphatases. In Homo sapiens (Human), this protein is Protein phosphatase 1 regulatory subunit 1A (PPP1R1A).